The sequence spans 587 residues: Phosphomethylpyrimidine synthase (587 aa).

Substrate is bound by residues N218, M247, Y276, H312, 332–334, 373–376, and E412; these read SRG and DGLR. Zn(2+) is bound at residue H416. Substrate is bound at residue Y439. Residue H480 coordinates Zn(2+). Residues C560, C563, and C568 each contribute to the [4Fe-4S] cluster site.

The protein belongs to the ThiC family. The cofactor is [4Fe-4S] cluster.

It carries out the reaction 5-amino-1-(5-phospho-beta-D-ribosyl)imidazole + S-adenosyl-L-methionine = 4-amino-2-methyl-5-(phosphooxymethyl)pyrimidine + CO + 5'-deoxyadenosine + formate + L-methionine + 3 H(+). It functions in the pathway cofactor biosynthesis; thiamine diphosphate biosynthesis. Functionally, catalyzes the synthesis of the hydroxymethylpyrimidine phosphate (HMP-P) moiety of thiamine from aminoimidazole ribotide (AIR) in a radical S-adenosyl-L-methionine (SAM)-dependent reaction. This Porphyromonas gingivalis (strain ATCC BAA-308 / W83) protein is Phosphomethylpyrimidine synthase.